A 113-amino-acid polypeptide reads, in one-letter code: uncharacterized protein (113 aa).

The HTH cro/C1-type domain maps to 16–70 (LYEYLEPLDLKINELAELLHVHRNSVSALINNNRKLTTEMAFRLAKVFDTTVDFW). Positions 27 to 46 (INELAELLHVHRNSVSALIN) form a DNA-binding region, H-T-H motif.

Belongs to the VapA/VapI family.

This is an uncharacterized protein from Escherichia coli O6:H1 (strain CFT073 / ATCC 700928 / UPEC).